Consider the following 244-residue polypeptide: MEMAAPVSPAPRTVEDIFKDFSGRRAGLVRALTVDVDEFYGFCDPEKENLCLYGHPNGRWEVALPAEEVPPELPEPALGINFARDGMHRRDWLSLVAVHSDSWLLSVAFFFGARLNGNERKRLFSLINDHPTVLEALSDRKHGRDNKSGADNGSKSRHSGKRANDVQTKTSRPAVVDDGYDEEEHSETLCGTCGGRYNANEFWIGCDICERWFHGKCVRITPAKAEHIKHYKCPDCSSSKKSRQ.

Positions 137 to 148 are enriched in basic and acidic residues; the sequence is LSDRKHGRDNKS. The segment at 137–178 is disordered; the sequence is LSDRKHGRDNKSGADNGSKSRHSGKRANDVQTKTSRPAVVDD. A PHD-type zinc finger spans residues 187–239; that stretch reads ETLCGTCGGRYNANEFWIGCDICERWFHGKCVRITPAKAEHIKHYKCPDCSSS.

The protein belongs to the Alfin family. In terms of assembly, interacts with H3K4me3 and to a lesser extent with H3K4me2.

It localises to the nucleus. Its function is as follows. Histone-binding component that specifically recognizes H3 tails trimethylated on 'Lys-4' (H3K4me3), which mark transcription start sites of virtually all active genes. This chain is PHD finger protein ALFIN-LIKE 2, found in Oryza sativa subsp. indica (Rice).